Reading from the N-terminus, the 676-residue chain is UvrABC system protein B (676 aa).

Positions arginine 39 to arginine 424 constitute a Helicase ATP-binding domain. Glycine 52–threonine 59 is a binding site for ATP. The Beta-hairpin signature appears at tyrosine 105–isoleucine 128. One can recognise a Helicase C-terminal domain in the interval glutamine 441–isoleucine 604. The segment at lysine 611 to serine 631 is disordered. A UVR domain is found at glutamate 629 to glutamine 664.

This sequence belongs to the UvrB family. As to quaternary structure, forms a heterotetramer with UvrA during the search for lesions. Interacts with UvrC in an incision complex.

Its subcellular location is the cytoplasm. Functionally, the UvrABC repair system catalyzes the recognition and processing of DNA lesions. A damage recognition complex composed of 2 UvrA and 2 UvrB subunits scans DNA for abnormalities. Upon binding of the UvrA(2)B(2) complex to a putative damaged site, the DNA wraps around one UvrB monomer. DNA wrap is dependent on ATP binding by UvrB and probably causes local melting of the DNA helix, facilitating insertion of UvrB beta-hairpin between the DNA strands. Then UvrB probes one DNA strand for the presence of a lesion. If a lesion is found the UvrA subunits dissociate and the UvrB-DNA preincision complex is formed. This complex is subsequently bound by UvrC and the second UvrB is released. If no lesion is found, the DNA wraps around the other UvrB subunit that will check the other stand for damage. The polypeptide is UvrABC system protein B (Chlamydia muridarum (strain MoPn / Nigg)).